An 870-amino-acid chain; its full sequence is MEFDLEFFRENNFVRKQCSVCSSYFWTLDDKRSTCGDPACNGYSFINKSPVYKKYNVDEMRDEFIKFFENDSLPHKFVEPYPVVPRWRDDVLLVNASIYDFQPQVTSGLAKPPGNPIVMSQPSIRMLDIDLVGKTGRHLTSFEMLCHDSFNYDDNYIYWKDETVRYSFRFLTERLRVDPLLITYKEKPWFGGGNAGNALEVFVMGLEVATLVFMDLKEDKNGDIELEGTRYSRMPLRVVDTGYGLERLVWLSTGTPTVYESIYKRSLDYIIKNSNAEYVSPEIMARISEIAAEIDPYSDELVLSRINKTGDKKFMEMLDNIRSAYGLVDHARTLLLMFSDYVIPSNVKVGYLARMLLRRSFRFMEKIKFNGSINDIFDAVYDEFNKIIKNYDKDFINNIIKIETEKYKEMLRSAPEIIRKHINKNTISNENIAKIYDTYGIPLEIISKVFKDLTNKELDIPENFQEYLVKLHENVKKPEKTVKDYPDINTRPLYYNDTGIMEFTGIVMYSNGNEIILNQTAFYPEGGGQPADHGYFLYNGKKIEVLDVQKYGNSIVHIINGSIPGHSRIKGFVDKERRTQLMIHHSATHLLLGICRAYFGEHVWQNSVKKDIDESRLDITHYKKITEDDIKNIENMCLDAIMASKNIHVKNIEWNRAISEYGFRLFEGGFPLSDTIRVVTIDDIDSEGCGGTHLKNTKDILMLKIVSTETVQEGIQRIVFTAGPAALRYSQKLYSIINDEQEYLKVPPEKIPEQSIKLVRENIENKKMINSLERELAEIYIKNALRIDDESFYIKSNEILSRVILKYTGARNGRFIINTGSRIYISSSYNDADVIASMLSNNYSGSKRVAICDCNANENLIKEILVKIKR.

The Zn(2+) site is built by His-585, His-589, Cys-689, and His-693.

This sequence belongs to the class-II aminoacyl-tRNA synthetase family. Requires Zn(2+) as cofactor.

It localises to the cytoplasm. It carries out the reaction tRNA(Ala) + L-alanine + ATP = L-alanyl-tRNA(Ala) + AMP + diphosphate. In terms of biological role, catalyzes the attachment of alanine to tRNA(Ala) in a two-step reaction: alanine is first activated by ATP to form Ala-AMP and then transferred to the acceptor end of tRNA(Ala). Also edits incorrectly charged Ser-tRNA(Ala) and Gly-tRNA(Ala) via its editing domain. This chain is Alanine--tRNA ligase, found in Picrophilus torridus (strain ATCC 700027 / DSM 9790 / JCM 10055 / NBRC 100828 / KAW 2/3).